Reading from the N-terminus, the 254-residue chain is Thiazole synthase (254 aa).

Lys95 functions as the Schiff-base intermediate with DXP in the catalytic mechanism. 1-deoxy-D-xylulose 5-phosphate-binding positions include Gly156, 182-183, and 204-205; these read AG and NT.

Belongs to the ThiG family. In terms of assembly, homotetramer. Forms heterodimers with either ThiH or ThiS.

Its subcellular location is the cytoplasm. The catalysed reaction is [ThiS sulfur-carrier protein]-C-terminal-Gly-aminoethanethioate + 2-iminoacetate + 1-deoxy-D-xylulose 5-phosphate = [ThiS sulfur-carrier protein]-C-terminal Gly-Gly + 2-[(2R,5Z)-2-carboxy-4-methylthiazol-5(2H)-ylidene]ethyl phosphate + 2 H2O + H(+). Its pathway is cofactor biosynthesis; thiamine diphosphate biosynthesis. Functionally, catalyzes the rearrangement of 1-deoxy-D-xylulose 5-phosphate (DXP) to produce the thiazole phosphate moiety of thiamine. Sulfur is provided by the thiocarboxylate moiety of the carrier protein ThiS. In vitro, sulfur can be provided by H(2)S. This is Thiazole synthase from Shewanella baltica (strain OS195).